Reading from the N-terminus, the 863-residue chain is Leucine--tRNA ligase (863 aa).

Positions 42–52 (PYPSGRLHMGH) match the 'HIGH' region motif. The 'KMSKS' region signature appears at 622–626 (KMSKS). Lysine 625 is an ATP binding site.

This sequence belongs to the class-I aminoacyl-tRNA synthetase family.

The protein resides in the cytoplasm. The catalysed reaction is tRNA(Leu) + L-leucine + ATP = L-leucyl-tRNA(Leu) + AMP + diphosphate. The chain is Leucine--tRNA ligase from Shewanella loihica (strain ATCC BAA-1088 / PV-4).